Reading from the N-terminus, the 268-residue chain is MSELYQHRARKRFGQNFLHDAGVIHRILRAIHAREGQRLLEIGPGQGALTEGLLGSGARLDVIELDQDLIPLLKLKFGLESRFSLHQGDALKFDFASLVESGEKLRVVGNLPYNISTPLIFHLLEHAPVIEDMHFMLQKEVVERLAATPGGGDWGRLSIMVQYHCRVEHLFNVGPGAFNPPPKVDSAIVRLTPFAEPPHPARDPKLLERVVREAFNQRRKTLRNTLKPLLSVEDIEAAEVDPTLRPEQLDLAAFVRLANQLAELPGNR.

N16, L18, G43, E64, D89, and N110 together coordinate S-adenosyl-L-methionine.

The protein belongs to the class I-like SAM-binding methyltransferase superfamily. rRNA adenine N(6)-methyltransferase family. RsmA subfamily.

The protein localises to the cytoplasm. It carries out the reaction adenosine(1518)/adenosine(1519) in 16S rRNA + 4 S-adenosyl-L-methionine = N(6)-dimethyladenosine(1518)/N(6)-dimethyladenosine(1519) in 16S rRNA + 4 S-adenosyl-L-homocysteine + 4 H(+). Specifically dimethylates two adjacent adenosines (A1518 and A1519) in the loop of a conserved hairpin near the 3'-end of 16S rRNA in the 30S particle. May play a critical role in biogenesis of 30S subunits. This chain is Ribosomal RNA small subunit methyltransferase A, found in Pseudomonas aeruginosa (strain ATCC 15692 / DSM 22644 / CIP 104116 / JCM 14847 / LMG 12228 / 1C / PRS 101 / PAO1).